We begin with the raw amino-acid sequence, 274 residues long: Thiamine kinase (274 aa).

It belongs to the thiamine kinase family.

The enzyme catalyses thiamine + ATP = thiamine phosphate + ADP + H(+). It participates in cofactor biosynthesis; thiamine diphosphate biosynthesis; thiamine phosphate from thiamine: step 1/1. Its function is as follows. Catalyzes the ATP-dependent phosphorylation of thiamine to thiamine phosphate. Is involved in thiamine salvage. The chain is Thiamine kinase from Escherichia coli O81 (strain ED1a).